Here is a 252-residue protein sequence, read N- to C-terminus: Probable transcriptional regulatory protein HNE_0161 (252 aa).

It belongs to the TACO1 family.

The protein localises to the cytoplasm. This Hyphomonas neptunium (strain ATCC 15444) protein is Probable transcriptional regulatory protein HNE_0161.